The following is a 330-amino-acid chain: MASSEKLKALQATMEKIEKNFGKGSIMKMGDDSVEQVEVIPTGSIALNVALGVGGYPRGRIIEIYGPESSGKTTLAIHAIAEAQKAGGIAAFIDAEHAFDRFYAAKLGVDVDNLWISQPDNGEQALEIAEQLIRSSAIDIIVIDSVAALTPKAEIEGDMGDNKVGLQARLMSQALRKLTGTVSKTRTTCIFINQLREKIGVMFGNPETTTGGNALKFYASVRIDIRGSQPIKDGEEVLGKLTKVKVVKNKVAPPFRKAEFDIMFGEGISHSGEIIDLGAELGIIKKSGSWYSYNDTKLGQGRDAAKVCIKDNPELAEELEGLIFEALNKK.

ATP is bound at residue 66–73 (GPESSGKT).

The protein belongs to the RecA family.

The protein localises to the cytoplasm. In terms of biological role, can catalyze the hydrolysis of ATP in the presence of single-stranded DNA, the ATP-dependent uptake of single-stranded DNA by duplex DNA, and the ATP-dependent hybridization of homologous single-stranded DNAs. It interacts with LexA causing its activation and leading to its autocatalytic cleavage. The polypeptide is Protein RecA (Bacteroides thetaiotaomicron (strain ATCC 29148 / DSM 2079 / JCM 5827 / CCUG 10774 / NCTC 10582 / VPI-5482 / E50)).